Here is a 789-residue protein sequence, read N- to C-terminus: Larval serum protein 1 beta chain (789 aa).

The first 16 residues, 1–16 (MKIAIALLACLGLAAA), serve as a signal peptide directing secretion.

This sequence belongs to the hemocyanin family. In terms of assembly, heterohexamer, composed of three subunits, alpha, beta and gamma. As to expression, larval hemolymph.

The protein localises to the secreted. It localises to the extracellular space. Larval storage protein (LSP) which may serve as a store of amino acids for synthesis of adult proteins. The polypeptide is Larval serum protein 1 beta chain (Lsp1beta) (Drosophila melanogaster (Fruit fly)).